Consider the following 607-residue polypeptide: UvrABC system protein C (607 aa).

A GIY-YIG domain is found at 16–94 (GRPGVYRMFD…IKEWRPPYNI (79 aa)). In terms of domain architecture, UVR spans 203 to 238 (QQLGNELNAEMEKAAMALDFEKAAELRDQIALLRRV).

The protein belongs to the UvrC family. In terms of assembly, interacts with UvrB in an incision complex.

The protein resides in the cytoplasm. Its function is as follows. The UvrABC repair system catalyzes the recognition and processing of DNA lesions. UvrC both incises the 5' and 3' sides of the lesion. The N-terminal half is responsible for the 3' incision and the C-terminal half is responsible for the 5' incision. The sequence is that of UvrABC system protein C from Pseudomonas putida (strain ATCC 47054 / DSM 6125 / CFBP 8728 / NCIMB 11950 / KT2440).